Reading from the N-terminus, the 320-residue chain is Cytochrome c biogenesis protein CcsA (320 aa).

Helical transmembrane passes span 13–33, 46–66, 73–93, 147–167, 226–246, 259–274, and 289–309; these read ISFS…FLLV, GMIV…IYSG, LYES…VSYL, MVLG…LLVI, IISL…VWAN, ETWA…IYFH, and VASM…LLGI.

The protein belongs to the CcmF/CycK/Ccl1/NrfE/CcsA family. May interact with Ccs1.

It localises to the plastid. The protein resides in the chloroplast thylakoid membrane. Its function is as follows. Required during biogenesis of c-type cytochromes (cytochrome c6 and cytochrome f) at the step of heme attachment. The protein is Cytochrome c biogenesis protein CcsA of Gossypium barbadense (Sea Island cotton).